The chain runs to 124 residues: Ragulator complex protein LAMTOR3 (124 aa).

A required for interaction with LAMTOR2 region spans residues 57-70 (TDQGSKLGLSKNKS).

Belongs to the LAMTOR3 family. In terms of assembly, part of the Ragulator complex composed of LAMTOR1, LAMTOR2, LAMTOR3, LAMTOR4 and LAMTOR5. LAMTOR4 and LAMTOR5 form a heterodimer that interacts, through LAMTOR1, with a LAMTOR2, LAMTOR3 heterodimer. Interacts with LAMTOR1 and LAMTOR2; the interaction is direct. The Ragulator complex interacts with both the mTORC1 complex and heterodimers constituted of the Rag GTPases RagA/RRAGA, RagB/RRAGB, RagC/RRAGC and RagD/RRAGD; regulated by amino acid availability. The Ragulator complex interacts with SLC38A9; the probable amino acid sensor. Component of the lysosomal folliculin complex (LFC), composed of FLCN, FNIP1 (or FNIP2), RagA/RRAGA or RagB/RRAGB GDP-bound, RagC/RRAGC or RagD/RRAGD GTP-bound, and Ragulator. Interacts with MAP2K1/MEK1 and MAPK2. Interacts with MORG1.

The protein localises to the late endosome membrane. In terms of biological role, as part of the Ragulator complex it is involved in amino acid sensing and activation of mTORC1, a signaling complex promoting cell growth in response to growth factors, energy levels, and amino acids. Activated by amino acids through a mechanism involving the lysosomal V-ATPase, the Ragulator plays a dual role for the small GTPases Rag (RagA/RRAGA, RagB/RRAGB, RagC/RRAGC and/or RagD/RRAGD): it (1) acts as a guanine nucleotide exchange factor (GEF), activating the small GTPases Rag and (2) mediates recruitment of Rag GTPases to the lysosome membrane. Activated Ragulator and Rag GTPases function as a scaffold recruiting mTORC1 to lysosomes where it is in turn activated. Adapter protein that enhances the efficiency of the MAP kinase cascade facilitating the activation of MAPK2. This Homo sapiens (Human) protein is Ragulator complex protein LAMTOR3.